Consider the following 144-residue polypeptide: Crossover junction endodeoxyribonuclease Hjc (144 aa).

E12 contacts Mg(2+). S32 is a catalytic residue. 2 residues coordinate Mg(2+): D42 and E55.

The protein belongs to the Holliday junction resolvase Hjc family. As to quaternary structure, homodimer; forms a 2:1 complex with Hel308 (Hjm). May form a complex with Holliday junction DNA, Hjc and Hjm. It depends on Mg(2+) as a cofactor.

The catalysed reaction is Endonucleolytic cleavage at a junction such as a reciprocal single-stranded crossover between two homologous DNA duplexes (Holliday junction).. Its activity is regulated as follows. Cleavage stimulated by PCNA123 and PCNA323 and by RadC2. Its function is as follows. A structure-specific endonuclease that resolves Holliday junction (HJ) intermediates during genetic recombination. Cleaves 4-way DNA junctions introducing paired nicks in opposing strands, leaving a 5'-terminal phosphate and a 3'-terminal hydroxyl group that are subsequently ligated to produce recombinant products. Inhibits the helicase activity of Hel308 (Hjm). This Sulfurisphaera tokodaii (strain DSM 16993 / JCM 10545 / NBRC 100140 / 7) (Sulfolobus tokodaii) protein is Crossover junction endodeoxyribonuclease Hjc.